Here is a 182-residue protein sequence, read N- to C-terminus: Nascent polypeptide-associated complex subunit alpha (182 aa).

In terms of domain architecture, NAC-A/B spans 17-81; that stretch reads NKNEKKAKEL…AKVDDMNQRI (65 aa). The tract at residues 120–148 is disordered; that stretch reads ASLQGGESNADAAEDDNEEVDETGINPKD. Over residues 131 to 141 the composition is skewed to acidic residues; that stretch reads AAEDDNEEVDE. In terms of domain architecture, UBA spans 144–182; sequence INPKDIDLIVEQTRVSRGSAVKALKKHDGDMVNALMELS.

The protein belongs to the NAC-alpha family. Part of the nascent polypeptide-associated complex (NAC), consisting of EGD2 and EGD1. NAC associates with ribosomes via EGD1.

Its subcellular location is the cytoplasm. The protein localises to the nucleus. Its function is as follows. Component of the nascent polypeptide-associated complex (NAC), a dynamic component of the ribosomal exit tunnel, protecting the emerging polypeptides from interaction with other cytoplasmic proteins to ensure appropriate nascent protein targeting. The NAC complex also promotes mitochondrial protein import by enhancing productive ribosome interactions with the outer mitochondrial membrane and blocks the inappropriate interaction of ribosomes translating non-secretory nascent polypeptides with translocation sites in the membrane of the endoplasmic reticulum. EGD2 may also be involved in transcription regulation. This is Nascent polypeptide-associated complex subunit alpha (EGD2) from Lodderomyces elongisporus (strain ATCC 11503 / CBS 2605 / JCM 1781 / NBRC 1676 / NRRL YB-4239) (Yeast).